A 102-amino-acid polypeptide reads, in one-letter code: Large ribosomal subunit protein bL21 (102 aa).

This sequence belongs to the bacterial ribosomal protein bL21 family. As to quaternary structure, part of the 50S ribosomal subunit. Contacts protein L20.

Functionally, this protein binds to 23S rRNA in the presence of protein L20. This chain is Large ribosomal subunit protein bL21, found in Arthrobacter sp. (strain FB24).